Here is an 81-residue protein sequence, read N- to C-terminus: Large ribosomal subunit protein bL28 (81 aa).

This sequence belongs to the bacterial ribosomal protein bL28 family.

The chain is Large ribosomal subunit protein bL28 from Gloeobacter violaceus (strain ATCC 29082 / PCC 7421).